Reading from the N-terminus, the 365-residue chain is Methionine import ATP-binding protein MetN (365 aa).

An ABC transporter domain is found at 17–256 (IVFEHVTKEF…PQSETTQRFL (240 aa)). 53-60 (GHSGAGKS) is a binding site for ATP. Positions 346-365 (SNSAAPTTSATVPTPTEEAH) are disordered.

Belongs to the ABC transporter superfamily. Methionine importer (TC 3.A.1.24) family. The complex is composed of two ATP-binding proteins (MetN), two transmembrane proteins (MetI) and a solute-binding protein (MetQ).

Its subcellular location is the cell membrane. The enzyme catalyses L-methionine(out) + ATP + H2O = L-methionine(in) + ADP + phosphate + H(+). The catalysed reaction is D-methionine(out) + ATP + H2O = D-methionine(in) + ADP + phosphate + H(+). Part of the ABC transporter complex MetNIQ involved in methionine import. Responsible for energy coupling to the transport system. The sequence is that of Methionine import ATP-binding protein MetN from Cutibacterium acnes (strain DSM 16379 / KPA171202) (Propionibacterium acnes).